Reading from the N-terminus, the 610-residue chain is DNA mismatch repair protein MutL (610 aa).

Belongs to the DNA mismatch repair MutL/HexB family.

This protein is involved in the repair of mismatches in DNA. It is required for dam-dependent methyl-directed DNA mismatch repair. May act as a 'molecular matchmaker', a protein that promotes the formation of a stable complex between two or more DNA-binding proteins in an ATP-dependent manner without itself being part of a final effector complex. The sequence is that of DNA mismatch repair protein MutL from Rickettsia rickettsii (strain Iowa).